The sequence spans 300 residues: Transmembrane protein 158 (300 aa).

An N-terminal signal peptide occupies residues 1 to 20 (MLPLLAALLAAACPLPPVRG). N-linked (GlcNAc...) asparagine glycosylation is present at Asn75. 2 consecutive transmembrane segments (helical) span residues 231–251 (LVIV…IAGF) and 273–293 (VPAG…AAAV).

This sequence belongs to the TMEM158 family. In terms of processing, N-glycosylated.

The protein localises to the membrane. In terms of biological role, receptor for brain injury-derived neurotrophic peptide (BINP), a synthetic 13-mer peptide. The protein is Transmembrane protein 158 (TMEM158) of Homo sapiens (Human).